The primary structure comprises 241 residues: Nicotinamide riboside kinase (241 aa).

21–29 (GCSSSGKST) is an ATP binding site. The Mg(2+) site is built by Ser-28 and Asp-47. The Proton acceptor role is filled by Asp-47. Residues 47–50 (DDFY), 67–68 (WD), and Asp-68 each bind substrate. Residue Arg-163 coordinates ATP. A substrate-binding site is contributed by Arg-164. ATP-binding positions include Arg-167, 167-169 (RGG), and 213-215 (DVQ). 169-170 (GY) contributes to the substrate binding site.

It belongs to the uridine kinase family. NRK subfamily.

The enzyme catalyses beta-nicotinamide D-riboside + ATP = beta-nicotinamide D-ribonucleotide + ADP + H(+). It catalyses the reaction beta-D-ribosylnicotinate + ATP = nicotinate beta-D-ribonucleotide + ADP + H(+). It functions in the pathway cofactor biosynthesis; NAD(+) biosynthesis. Functionally, catalyzes the phosphorylation of nicotinamide riboside (NR) and nicotinic acid riboside (NaR) to form nicotinamide mononucleotide (NMN) and nicotinic acid mononucleotide (NaMN). The polypeptide is Nicotinamide riboside kinase (NRK1) (Eremothecium gossypii (strain ATCC 10895 / CBS 109.51 / FGSC 9923 / NRRL Y-1056) (Yeast)).